A 386-amino-acid polypeptide reads, in one-letter code: Cytochrome b (386 aa).

Transmembrane regions (helical) follow at residues 32–52 (FGSLLALCLGIQIVTGVTLAM), 76–98 (WLIRYLHANTASAFFFLVYLHMG), 113–133 (TWNIGVVIFIVMIVTAFLGYV), and 179–199 (FFSLHYLLPFILAALVLMHLI). The heme b site is built by histidine 82 and histidine 96. Histidine 183 and histidine 197 together coordinate heme b. Histidine 202 provides a ligand contact to a ubiquinone. Helical transmembrane passes span 226 to 246 (FLFKDLVTIFLFMLGLSIFVL), 290 to 310 (TLGVVAMLGAILILMALPYLD), 322 to 342 (LSKIAFYIFIANFLVLMILGA), and 349 to 369 (FIIFGQISTTLYFSYFIIITP).

It belongs to the cytochrome b family. In terms of assembly, fungal cytochrome b-c1 complex contains 10 subunits; 3 respiratory subunits, 2 core proteins and 5 low-molecular weight proteins. Cytochrome b-c1 complex is a homodimer. Heme b is required as a cofactor.

Its subcellular location is the mitochondrion inner membrane. Functionally, component of the ubiquinol-cytochrome c reductase complex (complex III or cytochrome b-c1 complex) that is part of the mitochondrial respiratory chain. The b-c1 complex mediates electron transfer from ubiquinol to cytochrome c. Contributes to the generation of a proton gradient across the mitochondrial membrane that is then used for ATP synthesis. This is Cytochrome b (COB) from Trichophyton rubrum (Athlete's foot fungus).